The sequence spans 361 residues: Hydroxyproline O-arabinosyltransferase PLENTY (361 aa).

Residues 13 to 33 (LLMLLMVLGFFFATYNLVSMI) traverse the membrane as a helical; Signal-anchor segment.

It localises to the golgi apparatus membrane. It carries out the reaction trans-4-hydroxy-L-prolyl-[protein] + UDP-beta-L-arabinofuranose = O-(beta-L-arabinofuranosyl)-trans-4-hydroxy-L-prolyl-[protein] + UDP + H(+). Its function is as follows. Glycosyltransferase involved in the O-arabinosylation of several proteins including extensins and small signaling peptides. Catalyzes the transfer of the initial L-arabinose to the hydroxyl group of Hyp residues. Probably involved in the arabinosylation of CLAVATA3/ESR-related (CLE) signaling peptides that move from root to shoot, to interact with receptor kinase signaling that regulates nodulation. Involved in long distance nodulation signaling events. Involved in the autoregulation of nodulation (AON), a long distance systemic signaling from root to shoot and back again, which allows legumes to limit the number of root nodules formed based on available nitrogen and previous rhizobial colonization. This Lotus japonicus (Lotus corniculatus var. japonicus) protein is Hydroxyproline O-arabinosyltransferase PLENTY.